The chain runs to 156 residues: Ribosomal RNA large subunit methyltransferase H (156 aa).

Residues Leu73, Gly104, and 123 to 128 (LSALTL) contribute to the S-adenosyl-L-methionine site.

This sequence belongs to the RNA methyltransferase RlmH family. As to quaternary structure, homodimer.

The protein localises to the cytoplasm. It carries out the reaction pseudouridine(1915) in 23S rRNA + S-adenosyl-L-methionine = N(3)-methylpseudouridine(1915) in 23S rRNA + S-adenosyl-L-homocysteine + H(+). Functionally, specifically methylates the pseudouridine at position 1915 (m3Psi1915) in 23S rRNA. This Vibrio parahaemolyticus serotype O3:K6 (strain RIMD 2210633) protein is Ribosomal RNA large subunit methyltransferase H.